The chain runs to 473 residues: Chromosomal replication initiator protein DnaA (473 aa).

The interval 1–87 (MADGEESISV…LAVTTFAIVV (87 aa)) is domain I, interacts with DnaA modulators. The domain II stretch occupies residues 87–132 (VNPEIQQESLSTVGEPEPTPAPYLDVATFTVAPPAEITAPPRNGDT). Positions 133–349 (RLNSKYSFDN…GTLIRVTAFA (217 aa)) are domain III, AAA+ region. Residues G177, G179, K180, and T181 each contribute to the ATP site. Positions 350–473 (SLNRTPVDMP…LTSRIKQNHR (124 aa)) are domain IV, binds dsDNA.

This sequence belongs to the DnaA family. As to quaternary structure, oligomerizes as a right-handed, spiral filament on DNA at oriC.

The protein resides in the cytoplasm. Plays an essential role in the initiation and regulation of chromosomal replication. ATP-DnaA binds to the origin of replication (oriC) to initiate formation of the DNA replication initiation complex once per cell cycle. Binds the DnaA box (a 9 base pair repeat at the origin) and separates the double-stranded (ds)DNA. Forms a right-handed helical filament on oriC DNA; dsDNA binds to the exterior of the filament while single-stranded (ss)DNA is stabiized in the filament's interior. The ATP-DnaA-oriC complex binds and stabilizes one strand of the AT-rich DNA unwinding element (DUE), permitting loading of DNA polymerase. After initiation quickly degrades to an ADP-DnaA complex that is not apt for DNA replication. Binds acidic phospholipids. This is Chromosomal replication initiator protein DnaA from Leifsonia xyli subsp. xyli (strain CTCB07).